We begin with the raw amino-acid sequence, 399 residues long: V-set and immunoglobulin domain-containing protein 4 (399 aa).

Positions 1-19 (MGILLGLLLLGHLTVDTYG) are cleaved as a signal peptide. Topologically, residues 20–283 (RPILEVPESV…TSAGPGKSLP (264 aa)) are extracellular. Ig-like domains are found at residues 21 to 131 (PILE…DKIT) and 143 to 226 (PTVT…SDIV). 2 disulfide bridges follow: Cys-41-Cys-113 and Cys-165-Cys-211. Residues 284 to 304 (VFAIILIISLCCMVVFTMAYI) form a helical membrane-spanning segment. Residues 305–399 (MLCRKTSQQE…FLATEGKSVC (95 aa)) lie on the Cytoplasmic side of the membrane.

As to expression, abundantly expressed in several fetal tissues. In adult tissues, highest expression in lung and placenta. Expressed in resting macrophages.

The protein resides in the membrane. Phagocytic receptor, strong negative regulator of T-cell proliferation and IL2 production. Potent inhibitor of the alternative complement pathway convertases. The protein is V-set and immunoglobulin domain-containing protein 4 (VSIG4) of Homo sapiens (Human).